Here is a 296-residue protein sequence, read N- to C-terminus: 4-hydroxy-tetrahydrodipicolinate synthase (296 aa).

A pyruvate-binding site is contributed by Thr47. Tyr135 functions as the Proton donor/acceptor in the catalytic mechanism. Lys164 (schiff-base intermediate with substrate) is an active-site residue. Ile207 provides a ligand contact to pyruvate.

This sequence belongs to the DapA family. In terms of assembly, homotetramer; dimer of dimers.

It is found in the cytoplasm. It carries out the reaction L-aspartate 4-semialdehyde + pyruvate = (2S,4S)-4-hydroxy-2,3,4,5-tetrahydrodipicolinate + H2O + H(+). It functions in the pathway amino-acid biosynthesis; L-lysine biosynthesis via DAP pathway; (S)-tetrahydrodipicolinate from L-aspartate: step 3/4. Functionally, catalyzes the condensation of (S)-aspartate-beta-semialdehyde [(S)-ASA] and pyruvate to 4-hydroxy-tetrahydrodipicolinate (HTPA). This is 4-hydroxy-tetrahydrodipicolinate synthase from Karelsulcia muelleri (strain GWSS) (Sulcia muelleri).